Here is a 1209-residue protein sequence, read N- to C-terminus: Sterol 3-beta-glucosyltransferase (1209 aa).

A GRAM 1 domain is found at 167 to 217; it reads ERLIKKFLPNDDEKYIEEYPCWLLRDIMIQGHAYLTNKHLFFFAFIPNFES. One can recognise a PH domain in the interval 218 to 315; sequence DFNVTGSLRL…WVSSIKKQMF (98 aa). In terms of domain architecture, GRAM 2 spans 568-634; the sequence is VRFRQHFSFD…EDVENCYKET (67 aa). Residues Ser745, Arg746, Asp748, Asn1019, Val1048, His1050, His1063, Ser1066, Gly1067, Thr1068, Asp1087, and Gln1088 each coordinate UDP-alpha-D-glucose. The tract at residues 1186-1209 is disordered; that stretch reads AKGNEKEEYSSEGSGSNDGSWLLI. Residues 1196 to 1209 show a composition bias toward low complexity; that stretch reads SEGSGSNDGSWLLI.

It belongs to the glycosyltransferase 28 family.

Its subcellular location is the cytoplasm. The protein resides in the membrane. The enzyme catalyses a sterol + UDP-alpha-D-glucose = a sterol 3-beta-D-glucoside + UDP + H(+). It catalyses the reaction ergosterol + UDP-alpha-D-glucose = ergosteryl 3-beta-D-glucoside + UDP + H(+). Sterol glycosyltransferase responsible for the glycosylation of ergosterol to form ergosterol-glucoside. The sequence is that of Sterol 3-beta-glucosyltransferase from Kluyveromyces lactis (strain ATCC 8585 / CBS 2359 / DSM 70799 / NBRC 1267 / NRRL Y-1140 / WM37) (Yeast).